The sequence spans 191 residues: FMN reductase (NADH) RutF (191 aa).

The protein belongs to the non-flavoprotein flavin reductase family. RutF subfamily.

It catalyses the reaction FMNH2 + NAD(+) = FMN + NADH + 2 H(+). Its function is as follows. Catalyzes the reduction of FMN to FMNH2 which is used to reduce pyrimidine by RutA via the Rut pathway. The polypeptide is FMN reductase (NADH) RutF (Escherichia coli O1:K1 / APEC).